The chain runs to 84 residues: MRSSSKKKIDISNHELVPKHEILQLEEAYKLVKELGIKPEQLPWIRASDPVAKSIGAKPGDIIKITRKSPFTGESVTYRYVITG.

Belongs to the archaeal Rpo5/eukaryotic RPB5 RNA polymerase subunit family. In terms of assembly, part of the 13-subunit RNA polymerase.

The protein resides in the cytoplasm. It catalyses the reaction RNA(n) + a ribonucleoside 5'-triphosphate = RNA(n+1) + diphosphate. Its function is as follows. DNA-dependent RNA polymerase (RNAP) catalyzes the transcription of DNA into RNA using the four ribonucleoside triphosphates as substrates. In terms of biological role, reconstitution experiments show this subunit is required for basic activity. This is DNA-directed RNA polymerase subunit Rpo5 from Sulfolobus acidocaldarius (strain ATCC 33909 / DSM 639 / JCM 8929 / NBRC 15157 / NCIMB 11770).